Reading from the N-terminus, the 311-residue chain is tRNA-cytidine(32) 2-sulfurtransferase (311 aa).

The short motif at 47–52 (SGGKDS) is the PP-loop motif element. [4Fe-4S] cluster-binding residues include cysteine 122, cysteine 125, and cysteine 213.

The protein belongs to the TtcA family. In terms of assembly, homodimer. It depends on Mg(2+) as a cofactor. Requires [4Fe-4S] cluster as cofactor.

The protein localises to the cytoplasm. The catalysed reaction is cytidine(32) in tRNA + S-sulfanyl-L-cysteinyl-[cysteine desulfurase] + AH2 + ATP = 2-thiocytidine(32) in tRNA + L-cysteinyl-[cysteine desulfurase] + A + AMP + diphosphate + H(+). Its pathway is tRNA modification. Functionally, catalyzes the ATP-dependent 2-thiolation of cytidine in position 32 of tRNA, to form 2-thiocytidine (s(2)C32). The sulfur atoms are provided by the cysteine/cysteine desulfurase (IscS) system. The sequence is that of tRNA-cytidine(32) 2-sulfurtransferase from Escherichia coli (strain SMS-3-5 / SECEC).